Reading from the N-terminus, the 98-residue chain is MSMVYVNISLAFTLSLMGLLMYRSHLMSSLLCLEGMMLSLFVMMSITIMSNHFTLASMAPIILLVFAACEAALGLSLLVMISNTYGTDYVQNLNLLQC.

A run of 3 helical transmembrane segments spans residues 1 to 21 (MSMVYVNISLAFTLSLMGLLM), 29 to 49 (SLLCLEGMMLSLFVMMSITIM), and 61 to 81 (IILLVFAACEAALGLSLLVMI).

The protein belongs to the complex I subunit 4L family. As to quaternary structure, core subunit of respiratory chain NADH dehydrogenase (Complex I) which is composed of 45 different subunits.

It localises to the mitochondrion inner membrane. It carries out the reaction a ubiquinone + NADH + 5 H(+)(in) = a ubiquinol + NAD(+) + 4 H(+)(out). In terms of biological role, core subunit of the mitochondrial membrane respiratory chain NADH dehydrogenase (Complex I) which catalyzes electron transfer from NADH through the respiratory chain, using ubiquinone as an electron acceptor. Part of the enzyme membrane arm which is embedded in the lipid bilayer and involved in proton translocation. This chain is NADH-ubiquinone oxidoreductase chain 4L (MT-ND4L), found in Procyon lotor (Raccoon).